A 401-amino-acid polypeptide reads, in one-letter code: MRNKRRNRQIVVAVNGGKAVKAIFLFIVSLIVIFVLSGVLTSLRPELRPSSDSFYGIAEELPGDVFAHLLQMENHYFASDLSQTDSSFHLSRLSLKLATSINLEDPRSFLGRELPGFAQFDTEILLAGQGTDYTNMPAESPPPSKVMEEEREANLAEIEKQQTQSDNAQKDPPKQTTGDKKVVFIYHTHNTESYLPLLKGETDPDMARHSKANVTLVGDMFGQALESQGIGATVNKTDIQSKLNKKGLNYARSYDESRPVVKDALASNKNLQYIIDIHRDSRRKKDTTATIKGKSYARVAFVVGKKSKNFEENYKIASELHKLMEKKYPGLSTGVFSKGSPGDNGVYNQDLTDRALLLEFGGVDNNLEELQRAANAAADVFSEMYWDAEKVNAASGETKKQ.

The tract at residues 131–179 (TDYTNMPAESPPPSKVMEEEREANLAEIEKQQTQSDNAQKDPPKQTTGD) is disordered. 2 stretches are compositionally biased toward basic and acidic residues: residues 146-160 (VMEE…EIEK) and 168-179 (AQKDPPKQTTGD).

This is Stage II sporulation protein P (spoIIP) from Bacillus subtilis (strain 168).